Here is a 367-residue protein sequence, read N- to C-terminus: Probable cysteine protease RD19D (367 aa).

Residues 1–22 (MVAKALAQLITCIILFCHVVAS) form the signal peptide. A propeptide spans 23-136 (VEDLTIRQVT…AEAPMVEVDG (114 aa)) (activation peptide). The N-linked (GlcNAc...) asparagine glycan is linked to Asn-61. Intrachain disulfides connect Cys-158-Cys-208 and Cys-192-Cys-241. Residue Cys-161 is part of the active site. The N-linked (GlcNAc...) asparagine glycan is linked to Asn-254. A disulfide bridge links Cys-297 with Cys-352. Residues His-304 and Asn-331 contribute to the active site.

It belongs to the peptidase C1 family.

In terms of biological role, probable thiol protease. The sequence is that of Probable cysteine protease RD19D from Arabidopsis thaliana (Mouse-ear cress).